Reading from the N-terminus, the 492-residue chain is MAKFIMVVGTSSNSGKTVLVSGICRMLSNKGYKVAPFKSQNMSLNSRVSIEDGEIAVAQYTQAMAARAEPSVHFNPILLKPKGNFISQVIVHGTPYEDRDYNEYRSNKDDMLEKIKESIDYLDTNYDYVVIEGAGSCCEINLLKDDIANLRIAEISGADAILVSDIDRGGVFAAIYGTVQLLPENWRKLLKGFVINKFRGNIDVLKDGFEKIEELTNIPVIGTIPYDETLILPEEDSQALEGKRVFGNLKSPIEVNIVKFSKIANFTDVDPLSSDCLMRYLDFNDDITGDILILPGTRCSTVEMDLMKKHGMDKKIMEFIERGGIILGICGGYQTLGKMLIDENFSEGDVGTISGLGLFDMETTFGNKKAIKNSTGKISIFDQNFDVAGYELHEGYSVSNETPLISLSRGFGNCGNSYDGSFKVVGNSYIFGTYFHGILENFEFRNYLVNIVNNRKNLSKIENDNYAEIFNKNMDKLSKLIEESLDLSKIIK.

A GATase cobBQ-type domain is found at 252-444; that stretch reads PIEVNIVKFS…FHGILENFEF (193 aa). The Nucleophile role is filled by Cys-330. The active site involves His-436.

Belongs to the CobB/CobQ family. CobQ subfamily.

It participates in cofactor biosynthesis; adenosylcobalamin biosynthesis. Its function is as follows. Catalyzes amidations at positions B, D, E, and G on adenosylcobyrinic A,C-diamide. NH(2) groups are provided by glutamine, and one molecule of ATP is hydrogenolyzed for each amidation. This is Probable cobyric acid synthase from Methanococcus maripaludis (strain C7 / ATCC BAA-1331).